Consider the following 140-residue polypeptide: ATP synthase epsilon chain (140 aa).

This sequence belongs to the ATPase epsilon chain family. As to quaternary structure, F-type ATPases have 2 components, CF(1) - the catalytic core - and CF(0) - the membrane proton channel. CF(1) has five subunits: alpha(3), beta(3), gamma(1), delta(1), epsilon(1). CF(0) has three main subunits: a, b and c.

It is found in the cell inner membrane. Produces ATP from ADP in the presence of a proton gradient across the membrane. The protein is ATP synthase epsilon chain of Xylella fastidiosa (strain Temecula1 / ATCC 700964).